Here is a 281-residue protein sequence, read N- to C-terminus: MSSYDNHQALAGLTLGKSTDYRDTYDASLLQGVPRSLNRDPLGLHADNLPFHGADIWTLYELSWLNGKGLPQVAVGHVELPDTSLNLVESKSFKLYLNSFNQTRFASWQDVAETLTRDLSACAQGKVKVSLYRLDELEGQPIARLHGTCIDDQDIEIDNYQFSADYLQGAASGKIVEETLVSHLLKSNCLITHQPDWGSVQIQYRGAKIDREQLLRYLVSFRHHNEFHEQCVERIFNDILRFCQPESLSVYARYTRRGGLDINPWRSNGDFSPATGRLARQ.

88-90 (VES) is a substrate binding site. NADPH is bound at residue 90-91 (SK). Residue Cys-189 is the Thioimide intermediate of the active site. The Proton donor role is filled by Asp-196. Substrate is bound at residue 228–229 (HE). 257–258 (RG) serves as a coordination point for NADPH.

Belongs to the GTP cyclohydrolase I family. QueF type 2 subfamily. As to quaternary structure, homodimer.

Its subcellular location is the cytoplasm. The catalysed reaction is 7-aminomethyl-7-carbaguanine + 2 NADP(+) = 7-cyano-7-deazaguanine + 2 NADPH + 3 H(+). It functions in the pathway tRNA modification; tRNA-queuosine biosynthesis. Its function is as follows. Catalyzes the NADPH-dependent reduction of 7-cyano-7-deazaguanine (preQ0) to 7-aminomethyl-7-deazaguanine (preQ1). In Klebsiella pneumoniae subsp. pneumoniae (strain ATCC 700721 / MGH 78578), this protein is NADPH-dependent 7-cyano-7-deazaguanine reductase.